The chain runs to 366 residues: 3-dehydroquinate synthase (366 aa).

NAD(+) is bound by residues 69–74 (DGEAYK), 103–107 (GVIGD), 127–128 (TT), lysine 140, and lysine 149. The Zn(2+) site is built by glutamate 182, histidine 245, and histidine 262.

The protein belongs to the sugar phosphate cyclases superfamily. Dehydroquinate synthase family. Requires Co(2+) as cofactor. Zn(2+) is required as a cofactor. It depends on NAD(+) as a cofactor.

Its subcellular location is the cytoplasm. The enzyme catalyses 7-phospho-2-dehydro-3-deoxy-D-arabino-heptonate = 3-dehydroquinate + phosphate. It participates in metabolic intermediate biosynthesis; chorismate biosynthesis; chorismate from D-erythrose 4-phosphate and phosphoenolpyruvate: step 2/7. Functionally, catalyzes the conversion of 3-deoxy-D-arabino-heptulosonate 7-phosphate (DAHP) to dehydroquinate (DHQ). This Pseudomonas fluorescens (strain ATCC BAA-477 / NRRL B-23932 / Pf-5) protein is 3-dehydroquinate synthase.